Here is a 1263-residue protein sequence, read N- to C-terminus: Condensin complex subunit dpy-26 (1263 aa).

Polar residues predominate over residues 1–10 (MDVPSSSNVT). Residues 1 to 29 (MDVPSSSNVTGRRKRQVLDDDEDDGFRST) are disordered. Residues 691-725 (NEQMDETEVEERNEQDVQRELEDIALAADEVAELM) adopt a coiled-coil conformation. 2 disordered regions span residues 1098–1118 (YQAA…GTAN) and 1225–1263 (FSNL…EMEE). The segment covering 1106–1118 (NNQPTTSTYGTAN) has biased composition (polar residues). Over residues 1230 to 1241 (RRPKAVPVRKGR) the composition is skewed to basic residues.

As to quaternary structure, component of the condensin I complex, which contains the mix-1/SMC2 and smc-4/SMC4 heterodimer, and three non SMC subunits that probably regulate the complex: dpy-26, capg-1 and dpy-28. Within the complex, interacts with dpy-28, mix-1, smc-4 and capg-1. Component of the dosage compensation complex, which consists of the condensin I-like components mix-1/SMC2 and dpy-27/SMC4, and the three non SMC subunits dpy-26, capg-1 and dpy-28. Within the complex, interacts with dpy-27, dpy-28, mix-1 and capg-1. The interaction with dpy-27 is required for dpy-27 protein stability. Interacts with smcl-1. Expressed in embryos and in somatic and germline tissues in L4 stage larvae (at protein level).

The protein resides in the nucleus. The protein localises to the chromosome. Its function is as follows. Required for both chromosome condensation and segregation and for X-chromosome dosage compensation depending on its binding partners. Member of the condensin I complex, a complex required for conversion of interphase chromatin into mitotic-like condense chromosomes and for proper chromosome segregation in mitosis and meiosis. As a member of the condensin I complex, further controls the crossover number and distribution in meiosis by restricting double strand break formation, probably by influencing higher-order chromosome structure. Plays a role in robust cytokinesis upon presence of chromatin obstructions. Also a member of the condensin I-like dosage compensation complex that associates specifically with hermaphrodite X chromosomes to reduce their gene transcription during interphase, possibly through chromatin reorganization. As a member of the dosage compensation complex, also binds to regulatory regions of the autosomal her-1 gene, required for male development, possibly contributing to its repression in hermaphrodites. The chain is Condensin complex subunit dpy-26 from Caenorhabditis elegans.